We begin with the raw amino-acid sequence, 133 residues long: Interleukin-4 (133 aa).

The N-terminal stretch at 1 to 24 (MGLTSQLIPMLVCLLACTSNFVHG) is a signal peptide. Disulfide bonds link Cys27–Cys133, Cys48–Cys85, and Cys70–Cys105. N-linked (GlcNAc...) asparagine glycosylation is found at Asn62, Asn96, and Asn102.

This sequence belongs to the IL-4/IL-13 family.

It is found in the secreted. In terms of biological role, participates in at least several B-cell activation processes as well as of other cell types. It is a costimulator of DNA-synthesis. It induces the expression of class II MHC molecules on resting B-cells. It enhances both secretion and cell surface expression of IgE and IgG1. It also regulates the expression of the low affinity Fc receptor for IgE (CD23) on both lymphocytes and monocytes. Positively regulates IL31RA expression in macrophages. Stimulates autophagy in dendritic cells by interfering with mTORC1 signaling and through the induction of RUFY4. The protein is Interleukin-4 (IL4) of Tursiops truncatus (Atlantic bottle-nosed dolphin).